A 307-amino-acid polypeptide reads, in one-letter code: Elongation factor Ts (307 aa).

The tract at residues 80-83 (TDFV) is involved in Mg(2+) ion dislocation from EF-Tu.

Belongs to the EF-Ts family.

The protein localises to the cytoplasm. In terms of biological role, associates with the EF-Tu.GDP complex and induces the exchange of GDP to GTP. It remains bound to the aminoacyl-tRNA.EF-Tu.GTP complex up to the GTP hydrolysis stage on the ribosome. This is Elongation factor Ts from Clostridium botulinum (strain Kyoto / Type A2).